A 379-amino-acid polypeptide reads, in one-letter code: MPRSSRSPGDPGALLEDVAHNPRPRRIAQRGRNTSRMAEDTSPNMNDNILLPVRNNDQALGLTQCMLGCVSWFTCFACSLRTQAQQVLFNTCRCKLLCQKLMEKTGILLLCAFGFWMFSIHLPSKMKVWQDDSINGPLQSLRLYQEKVRHHSGEIQDLRGSMNQLIAKLQEMEAMSDEQKMAQKIMKMIHGDYIEKPDFALKSIGASIDFEHTSVTYNHEKAHSYWNWIQLWNYAQPPDVILEPNVTPGNCWAFEGDRGQVTIQLAQKVYLSNLTLQHIPKTISLSGSLDTAPKDFVIYGMEGSPKEEVFLGAFQFQPENIIQMFPLQNQPARAFSAVKVKISSNWGNPGFTCLYRVRVHGSVAPPREQPHQNPYPKRD.

Residues 1–45 form a disordered region; it reads MPRSSRSPGDPGALLEDVAHNPRPRRIAQRGRNTSRMAEDTSPNM. At 1-105 the chain is on the nuclear side; sequence MPRSSRSPGD…LLCQKLMEKT (105 aa). Polar residues predominate over residues 31–45; it reads GRNTSRMAEDTSPNM. The chain crosses the membrane as a helical span at residues 106 to 122; it reads GILLLCAFGFWMFSIHL. Topologically, residues 123–379 are perinuclear space; sequence PSKMKVWQDD…PHQNPYPKRD (257 aa). Residues 141 to 182 are a coiled coil; it reads LRLYQEKVRHHSGEIQDLRGSMNQLIAKLQEMEAMSDEQKMA. The SUN domain occupies 205 to 364; the sequence is GASIDFEHTS…YRVRVHGSVA (160 aa).

As to quaternary structure, probable homotrimer. Interacts with DNAJB13. Highly glycosylated in the Golgi apparatus during spermiogenesis. Sperm (at protein level). Widely expressed. Conflictingly shown to be specifically expressed in testis.

Its subcellular location is the nucleus inner membrane. The protein resides in the golgi apparatus. In terms of biological role, plays an essential role in anchoring sperm head to the tail. Is responsible for the attachment of the coupling apparatus to the sperm nuclear envelope. This chain is SUN domain-containing protein 5 (SUN5), found in Homo sapiens (Human).